The primary structure comprises 378 residues: Phospho-N-acetylmuramoyl-pentapeptide-transferase (378 aa).

10 helical membrane passes run threonine 27 to asparagine 47, threonine 74 to leucine 94, tyrosine 96 to aspartate 116, leucine 135 to tyrosine 155, tryptophan 184 to tyrosine 204, glycine 216 to glycine 236, leucine 256 to histidine 276, isoleucine 280 to leucine 300, isoleucine 305 to valine 325, and lysine 355 to leucine 375.

The protein belongs to the glycosyltransferase 4 family. MraY subfamily. The cofactor is Mg(2+).

Its subcellular location is the cell inner membrane. It catalyses the reaction UDP-N-acetyl-alpha-D-muramoyl-L-alanyl-gamma-D-glutamyl-meso-2,6-diaminopimeloyl-D-alanyl-D-alanine + di-trans,octa-cis-undecaprenyl phosphate = di-trans,octa-cis-undecaprenyl diphospho-N-acetyl-alpha-D-muramoyl-L-alanyl-D-glutamyl-meso-2,6-diaminopimeloyl-D-alanyl-D-alanine + UMP. It functions in the pathway cell wall biogenesis; peptidoglycan biosynthesis. Its function is as follows. Catalyzes the initial step of the lipid cycle reactions in the biosynthesis of the cell wall peptidoglycan: transfers peptidoglycan precursor phospho-MurNAc-pentapeptide from UDP-MurNAc-pentapeptide onto the lipid carrier undecaprenyl phosphate, yielding undecaprenyl-pyrophosphoryl-MurNAc-pentapeptide, known as lipid I. In Solibacter usitatus (strain Ellin6076), this protein is Phospho-N-acetylmuramoyl-pentapeptide-transferase.